The sequence spans 351 residues: Lipoyl synthase, mitochondrial (351 aa).

[4Fe-4S] cluster is bound by residues cysteine 84, cysteine 89, cysteine 95, cysteine 115, cysteine 119, cysteine 122, and serine 330. In terms of domain architecture, Radical SAM core spans 100-319 (DKSKATATIM…QKRAMDMGFL (220 aa)).

The protein belongs to the radical SAM superfamily. Lipoyl synthase family. The cofactor is [4Fe-4S] cluster.

Its subcellular location is the mitochondrion. The catalysed reaction is [[Fe-S] cluster scaffold protein carrying a second [4Fe-4S](2+) cluster] + N(6)-octanoyl-L-lysyl-[protein] + 2 oxidized [2Fe-2S]-[ferredoxin] + 2 S-adenosyl-L-methionine + 4 H(+) = [[Fe-S] cluster scaffold protein] + N(6)-[(R)-dihydrolipoyl]-L-lysyl-[protein] + 4 Fe(3+) + 2 hydrogen sulfide + 2 5'-deoxyadenosine + 2 L-methionine + 2 reduced [2Fe-2S]-[ferredoxin]. The protein operates within protein modification; protein lipoylation via endogenous pathway; protein N(6)-(lipoyl)lysine from octanoyl-[acyl-carrier-protein]: step 2/2. In terms of biological role, catalyzes the radical-mediated insertion of two sulfur atoms into the C-6 and C-8 positions of the octanoyl moiety bound to the lipoyl domains of lipoate-dependent enzymes, thereby converting the octanoylated domains into lipoylated derivatives. The chain is Lipoyl synthase, mitochondrial from Yarrowia lipolytica (strain CLIB 122 / E 150) (Yeast).